The sequence spans 316 residues: Ribosomal RNA small subunit methyltransferase H (316 aa).

Residues 35–37, D55, F80, D102, and Q109 each bind S-adenosyl-L-methionine; that span reads GGH.

Belongs to the methyltransferase superfamily. RsmH family.

Its subcellular location is the cytoplasm. The catalysed reaction is cytidine(1402) in 16S rRNA + S-adenosyl-L-methionine = N(4)-methylcytidine(1402) in 16S rRNA + S-adenosyl-L-homocysteine + H(+). Specifically methylates the N4 position of cytidine in position 1402 (C1402) of 16S rRNA. In Colwellia psychrerythraea (strain 34H / ATCC BAA-681) (Vibrio psychroerythus), this protein is Ribosomal RNA small subunit methyltransferase H.